Consider the following 90-residue polypeptide: Small ribosomal subunit protein uS19 (90 aa).

Belongs to the universal ribosomal protein uS19 family.

In terms of biological role, protein S19 forms a complex with S13 that binds strongly to the 16S ribosomal RNA. This is Small ribosomal subunit protein uS19 from Thioalkalivibrio sulfidiphilus (strain HL-EbGR7).